We begin with the raw amino-acid sequence, 468 residues long: Siroheme synthase (468 aa).

The tract at residues Met1–Met202 is precorrin-2 dehydrogenase /sirohydrochlorin ferrochelatase. Residues Asp22–Ile23 and Pro43–Ser44 each bind NAD(+). Ser126 carries the post-translational modification Phosphoserine. The tract at residues Gly214–Ala468 is uroporphyrinogen-III C-methyltransferase. Pro223 provides a ligand contact to S-adenosyl-L-methionine. The Proton acceptor role is filled by Asp246. The Proton donor role is filled by Lys268. Residues Gly299 to Asp301, Thr329 to Ala330, Met381, and Gly410 contribute to the S-adenosyl-L-methionine site.

The protein in the N-terminal section; belongs to the precorrin-2 dehydrogenase / sirohydrochlorin ferrochelatase family. This sequence in the C-terminal section; belongs to the precorrin methyltransferase family.

It carries out the reaction uroporphyrinogen III + 2 S-adenosyl-L-methionine = precorrin-2 + 2 S-adenosyl-L-homocysteine + H(+). The enzyme catalyses precorrin-2 + NAD(+) = sirohydrochlorin + NADH + 2 H(+). It catalyses the reaction siroheme + 2 H(+) = sirohydrochlorin + Fe(2+). It participates in cofactor biosynthesis; adenosylcobalamin biosynthesis; precorrin-2 from uroporphyrinogen III: step 1/1. It functions in the pathway cofactor biosynthesis; adenosylcobalamin biosynthesis; sirohydrochlorin from precorrin-2: step 1/1. The protein operates within porphyrin-containing compound metabolism; siroheme biosynthesis; precorrin-2 from uroporphyrinogen III: step 1/1. Its pathway is porphyrin-containing compound metabolism; siroheme biosynthesis; siroheme from sirohydrochlorin: step 1/1. It participates in porphyrin-containing compound metabolism; siroheme biosynthesis; sirohydrochlorin from precorrin-2: step 1/1. Multifunctional enzyme that catalyzes the SAM-dependent methylations of uroporphyrinogen III at position C-2 and C-7 to form precorrin-2 via precorrin-1. Then it catalyzes the NAD-dependent ring dehydrogenation of precorrin-2 to yield sirohydrochlorin. Finally, it catalyzes the ferrochelation of sirohydrochlorin to yield siroheme. In Tolumonas auensis (strain DSM 9187 / NBRC 110442 / TA 4), this protein is Siroheme synthase.